The primary structure comprises 369 residues: Peptide chain release factor 2 (369 aa).

The residue at position 251 (glutamine 251) is an N5-methylglutamine.

It belongs to the prokaryotic/mitochondrial release factor family. Methylated by PrmC. Methylation increases the termination efficiency of RF2.

It localises to the cytoplasm. Its function is as follows. Peptide chain release factor 2 directs the termination of translation in response to the peptide chain termination codons UGA and UAA. This is Peptide chain release factor 2 from Acidothermus cellulolyticus (strain ATCC 43068 / DSM 8971 / 11B).